The sequence spans 299 residues: MDQHLDAYCMHLRSERQVSPHTLEAYRRDLGKVLAYCQKAQVSSWSDLDIQHLRSFTARQHQQGQSSRSLARMLSAVRGFYKYLNREGICQHDPANGLSPPKGERRLPKTLDTDRAAQLLDGGVEDDFLAHRDQAILELLYSSGLRLSELTGLNLDQLDLRDGLVQVLGKGSKTRVLPVGSKARQALEVWLPLRALTNPQDDAVFVSQQGKRLGPRAIQVRLKAAGERELGQNLHPHMLRHSFASHLLESSQDLRAVQELLGHADIKTTQIYTHLDFQHLATVYDSAHPRAKRKGTADD.

The region spanning 1–85 is the Core-binding (CB) domain; sequence MDQHLDAYCM…AVRGFYKYLN (85 aa). One can recognise a Tyr recombinase domain in the interval 106–285; that stretch reads RLPKTLDTDR…DFQHLATVYD (180 aa). Catalysis depends on residues Arg146, Lys170, His237, Arg240, and His263. Tyr272 (O-(3'-phospho-DNA)-tyrosine intermediate) is an active-site residue.

Belongs to the 'phage' integrase family. XerC subfamily. Forms a cyclic heterotetrameric complex composed of two molecules of XerC and two molecules of XerD.

The protein resides in the cytoplasm. In terms of biological role, site-specific tyrosine recombinase, which acts by catalyzing the cutting and rejoining of the recombining DNA molecules. The XerC-XerD complex is essential to convert dimers of the bacterial chromosome into monomers to permit their segregation at cell division. It also contributes to the segregational stability of plasmids. The chain is Tyrosine recombinase XerC from Pseudomonas syringae pv. syringae (strain B728a).